Here is a 554-residue protein sequence, read N- to C-terminus: Inactive sesquithujene synthase (554 aa).

Positions 308 and 312 each coordinate Mg(2+). The substrate site is built by D308, D312, R449, and N452. Residues 308–312 carry the DDXXD motif motif; it reads DDMFD. 3 residues coordinate Mg(2+): N452, S456, and E460.

Belongs to the terpene synthase family. In terms of assembly, monomer. It depends on Mg(2+) as a cofactor. Mn(2+) serves as cofactor.

The protein resides in the cytoplasm. It functions in the pathway secondary metabolite biosynthesis; terpenoid biosynthesis. Non-functional sesquiterpene synthase having less than 1% of the activity found in cv. Delprim. The chain is Inactive sesquithujene synthase from Zea mays (Maize).